We begin with the raw amino-acid sequence, 233 residues long: UPF0128 protein MJ1463 (233 aa).

The protein belongs to the UPF0128 family.

In Methanocaldococcus jannaschii (strain ATCC 43067 / DSM 2661 / JAL-1 / JCM 10045 / NBRC 100440) (Methanococcus jannaschii), this protein is UPF0128 protein MJ1463.